The primary structure comprises 244 residues: Ribonuclease HII (244 aa).

Positions 23-236 constitute an RNase H type-2 domain; that stretch reads KIILGLDEAG…SKKLLKEFEE (214 aa). Residues Asp-29, Glu-30, and Asp-130 each coordinate a divalent metal cation.

Belongs to the RNase HII family. Mn(2+) is required as a cofactor. Requires Mg(2+) as cofactor.

It localises to the cytoplasm. The catalysed reaction is Endonucleolytic cleavage to 5'-phosphomonoester.. Its function is as follows. Endonuclease that specifically degrades the RNA of RNA-DNA hybrids. In Methanococcus vannielii (strain ATCC 35089 / DSM 1224 / JCM 13029 / OCM 148 / SB), this protein is Ribonuclease HII.